The following is a 68-amino-acid chain: Protein SlyX homolog (68 aa).

The protein belongs to the SlyX family.

In Pseudomonas syringae pv. tomato (strain ATCC BAA-871 / DC3000), this protein is Protein SlyX homolog.